The sequence spans 81 residues: Large ribosomal subunit protein bL31B (81 aa).

It belongs to the bacterial ribosomal protein bL31 family. Type B subfamily. In terms of assembly, part of the 50S ribosomal subunit.

This is Large ribosomal subunit protein bL31B from Oceanobacillus iheyensis (strain DSM 14371 / CIP 107618 / JCM 11309 / KCTC 3954 / HTE831).